Consider the following 308-residue polypeptide: Spermidine synthase 1 (308 aa).

Residues 17–254 (PGWFSEISPL…GVIGFMLCST (238 aa)) form the PABS domain. An S-adenosyl 3-(methylsulfanyl)propylamine-binding site is contributed by Gln-48. Tyr-78 serves as a coordination point for putrescine. Residues Gln-79, Asp-103, Glu-123, 154 to 155 (DG), and Asp-173 contribute to the S-adenosyl 3-(methylsulfanyl)propylamine site. Residue Asp-173 is the Proton acceptor of the active site. Putrescine-binding positions include 173 to 176 (DSSD) and Tyr-242.

It belongs to the spermidine/spermine synthase family.

It catalyses the reaction S-adenosyl 3-(methylsulfanyl)propylamine + putrescine = S-methyl-5'-thioadenosine + spermidine + H(+). It participates in amine and polyamine biosynthesis; spermidine biosynthesis; spermidine from putrescine: step 1/1. The chain is Spermidine synthase 1 from Datura stramonium (Jimsonweed).